Here is a 1489-residue protein sequence, read N- to C-terminus: WD repeat-containing protein 7 (1489 aa).

WD repeat units follow at residues 17–56, 62–104, 156–199, 324–366, 404–443, 462–507, and 558–597; these read APTH…EVNP, GHTA…CIEF, ISPD…SGMQ, VICP…EKQE, NEPL…IVQL, GHRN…MKHI, and RHLF…LDRC. Disordered regions lie at residues 754 to 783 and 911 to 947; these read IKEH…YRAS and GDHM…QGQI. Residues 767-782 show a composition bias toward basic and acidic residues; the sequence is EARRQSREDSDPEYRA. Phosphoserine is present on serine 935. WD repeat units lie at residues 1350–1389 and 1391–1431; these read PAIC…CQTI and GHKG…LGSI. Position 1455 is a phosphoserine (serine 1455).

This Mus musculus (Mouse) protein is WD repeat-containing protein 7 (Wdr7).